Consider the following 635-residue polypeptide: Probable monoacyl phosphatidylinositol tetramannoside-binding protein LpqW (635 aa).

The first 26 residues, 1–26 (MGVPSPVRRVCVTVGALVALACMVLA), serve as a signal peptide directing secretion. Disordered regions lie at residues 32 to 52 (PPPAPQSTDTPRSTPPPPRRP), 389 to 412 (NTSVSPAPSVPDSTTTSVSTGPPE), and 511 to 551 (NAPT…LVKA). 2 stretches are compositionally biased toward low complexity: residues 390–411 (TSVSPAPSVPDSTTTSVSTGPP) and 511–531 (NAPTTAPSAPIGPTPSAAPDT).

The protein belongs to the bacterial solute-binding protein 5 family.

It functions in the pathway phospholipid metabolism; phosphatidylinositol metabolism. In terms of biological role, may directly or indirectly regulate the accessibility of the key branch point intermediate, monoacyl phosphatidylinositol tetramannoside (AcPIM4), to the elongating alpha-1,6 mannosyltransferases which could regulate the lipoarabinomannans (LAMs) biosynthesis. This chain is Probable monoacyl phosphatidylinositol tetramannoside-binding protein LpqW (lpqW), found in Mycobacterium tuberculosis (strain CDC 1551 / Oshkosh).